A 440-amino-acid chain; its full sequence is Tuliposide B-converting enzyme 1, amyloplastic (440 aa).

The N-terminal 58 residues, 1–58 (MSIVSFCSSLPAGPHGFKHGRGTRDMVHMPCIVRRTARSPAQACRLLRWNKYHCAAVP), are a transit peptide targeting the amyloplast. The Acyl-ester intermediate role is filled by S232. Catalysis depends on charge relay system residues D325 and H357.

Belongs to the AB hydrolase superfamily. Homodimer. Not glycosylated. As to expression, expressed in the pollen grains.

Its subcellular location is the plastid. The protein resides in the amyloplast. The catalysed reaction is 6-tuliposide B = tulipalin B + D-glucose. Inhibited by Ag(+), Cu(2+), Fe(2+), Hg(2+), V(3+) and phenylmethylsulfonyl fluoride (PMSF). Lactone-forming carboxylesterase, specifically catalyzing intramolecular transesterification, but not hydrolysis. Involved in the biosynthesis of tulipalins, defensive chemicals that show antimicrobial activities against a broad range of strains of bacteria and fungi. Substrates are 6-tuliposide B &gt; 6-tuliposide A. The polypeptide is Tuliposide B-converting enzyme 1, amyloplastic (Tulipa gesneriana (Garden tulip)).